The primary structure comprises 358 residues: Probable D-xylulose reductase A (358 aa).

Zn(2+)-binding residues include Cys-47, His-72, and Glu-73. 182–187 (GAGPVG) contributes to the NAD(+) binding site.

The protein belongs to the zinc-containing alcohol dehydrogenase family. The cofactor is Zn(2+).

The catalysed reaction is xylitol + NAD(+) = D-xylulose + NADH + H(+). Its pathway is carbohydrate degradation; L-arabinose degradation via L-arabinitol; D-xylulose 5-phosphate from L-arabinose (fungal route): step 4/5. Xylitol dehydrogenase which catalyzes the conversion of xylitol to D-xylulose. Xylose is a major component of hemicelluloses such as xylan. Most fungi utilize D-xylose via three enzymatic reactions, xylose reductase (XR), xylitol dehydrogenase (XDH), and xylulokinase, to form xylulose 5-phosphate, which enters pentose phosphate pathway. The protein is Probable D-xylulose reductase A (xdhA) of Aspergillus fumigatus (strain CBS 144.89 / FGSC A1163 / CEA10) (Neosartorya fumigata).